A 255-amino-acid chain; its full sequence is Protein DOG1-like 2 (255 aa).

A DOG1 domain is found at 10-246 (EKLQKRCYHE…HDRGRVRADV (237 aa)).

This is Protein DOG1-like 2 from Arabidopsis thaliana (Mouse-ear cress).